The following is a 396-amino-acid chain: Gap junction gamma-1 protein (396 aa).

Over 1 to 22 (MSWSFLTRLLEEIHNHSTFVGK) the chain is Cytoplasmic. A helical transmembrane segment spans residues 23-45 (IWLTVLIAFRIALTAVGGESIYY). Residues 46 to 75 (DEQSKFVCNTEQPGCENVCYDAFAPLSHVR) lie on the Extracellular side of the membrane. A helical transmembrane segment spans residues 76–95 (FWVFQIILVATPSVMYLGYA). The Cytoplasmic segment spans residues 96-175 (IHKIAKMEHG…RRIREDGLMK (80 aa)). Residues 145 to 165 (ELESEKENKEQNQPKPKHDGR) form a disordered region. Basic and acidic residues predominate over residues 147–156 (ESEKENKEQN). A helical transmembrane segment spans residues 176–198 (IYVLQLLARTVFEVGFLIGQYFL). The Extracellular segment spans residues 199–228 (YGFQVHPFYVCSRLPCPHKIDCFISRPTEK). Residues 229 to 248 (TIFLLIMYGVTGLCLLLNIW) form a helical membrane-spanning segment. The Cytoplasmic portion of the chain corresponds to 249 to 396 (EMLHLGFGTI…SGDGKNSVWI (148 aa)). The disordered stretch occupies residues 355-396 (AYSHQNNPHGPREKKAKVGSKAGSNKSSASSKSGDGKNSVWI). Residues 373–396 (GSKAGSNKSSASSKSGDGKNSVWI) show a composition bias toward low complexity.

Belongs to the connexin family. Gamma-type subfamily. As to quaternary structure, a connexon is composed of a hexamer of connexins. Interacts with CNST.

The protein localises to the cell membrane. It is found in the cell junction. The protein resides in the gap junction. In terms of biological role, one gap junction consists of a cluster of closely packed pairs of transmembrane channels, the connexons, through which materials of low MW diffuse from one cell to a neighboring cell. This Canis lupus familiaris (Dog) protein is Gap junction gamma-1 protein (GJC1).